The sequence spans 310 residues: HPr kinase/phosphorylase (310 aa).

Catalysis depends on residues His138 and Lys159. 153-160 provides a ligand contact to ATP; sequence GDSGIGKS. Ser160 lines the Mg(2+) pocket. Asp177 functions as the Proton acceptor; for phosphorylation activity. Proton donor; for dephosphorylation activity in the catalytic mechanism. The tract at residues 201 to 210 is important for the catalytic mechanism of both phosphorylation and dephosphorylation; that stretch reads LEIRGVGIID. A Mg(2+)-binding site is contributed by Glu202. Residue Arg243 is part of the active site. Residues 264–269 form an important for the catalytic mechanism of dephosphorylation region; the sequence is PVKTGR.

It belongs to the HPrK/P family. Homohexamer. Mg(2+) is required as a cofactor.

The enzyme catalyses [HPr protein]-L-serine + ATP = [HPr protein]-O-phospho-L-serine + ADP + H(+). It carries out the reaction [HPr protein]-O-phospho-L-serine + phosphate + H(+) = [HPr protein]-L-serine + diphosphate. Functionally, catalyzes the ATP- as well as the pyrophosphate-dependent phosphorylation of a specific serine residue in HPr, a phosphocarrier protein of the phosphoenolpyruvate-dependent sugar phosphotransferase system (PTS). HprK/P also catalyzes the pyrophosphate-producing, inorganic phosphate-dependent dephosphorylation (phosphorolysis) of seryl-phosphorylated HPr (P-Ser-HPr). The two antagonistic activities of HprK/P are regulated by several intracellular metabolites, which change their concentration in response to the absence or presence of rapidly metabolisable carbon sources (glucose, fructose, etc.) in the growth medium. Therefore, by controlling the phosphorylation state of HPr, HPrK/P is a sensor enzyme that plays a major role in the regulation of carbon metabolism and sugar transport: it mediates carbon catabolite repression (CCR), and regulates PTS-catalyzed carbohydrate uptake and inducer exclusion. This Streptococcus equi subsp. equi (strain 4047) protein is HPr kinase/phosphorylase.